A 489-amino-acid polypeptide reads, in one-letter code: Rhamnulokinase (489 aa).

Position 13 to 17 (13 to 17 (ASSGR)) interacts with ATP. An intrachain disulfide couples Cys68 to Cys222. Substrate contacts are provided by residues Gly83 and 236 to 238 (HDT). The active-site Proton acceptor is Asp237. Position 259 (Thr259) interacts with ATP. Substrate is bound at residue Asn296. ATP is bound at residue Gln304. Cys353 and Cys370 are oxidised to a cystine. Gly402 is a binding site for ATP. Cys413 and Cys417 are oxidised to a cystine.

Belongs to the rhamnulokinase family. Mg(2+) is required as a cofactor.

It carries out the reaction L-rhamnulose + ATP = L-rhamnulose 1-phosphate + ADP + H(+). Its pathway is carbohydrate degradation; L-rhamnose degradation; glycerone phosphate from L-rhamnose: step 2/3. Functionally, involved in the catabolism of L-rhamnose (6-deoxy-L-mannose). Catalyzes the transfer of the gamma-phosphate group from ATP to the 1-hydroxyl group of L-rhamnulose to yield L-rhamnulose 1-phosphate. This Salmonella choleraesuis (strain SC-B67) protein is Rhamnulokinase.